The chain runs to 622 residues: Apical membrane antigen 1 (622 aa).

A signal peptide spans 1–24; that stretch reads MRKLYCVLLLSAFEFTYMINFGRG. The Extracellular portion of the chain corresponds to 25–546; sequence QNYWEHPYQK…EHKPTYDKMK (522 aa). 5 disulfide bridges follow: Cys149–Cys302, Cys217–Cys247, Cys263–Cys275, Cys320–Cys418, and Cys337–Cys409. Asn162 is a glycosylation site (N-linked (GlcNAc...) asparagine). N-linked (GlcNAc...) asparagine glycosylation is found at Asn286, Asn371, Asn421, Asn422, and Asn499. 3 disulfide bridges follow: Cys443–Cys502, Cys490–Cys507, and Cys492–Cys509. Residues 547 to 567 traverse the membrane as a helical segment; that stretch reads IIIASSAAVAVLATILMVYLY. At 568 to 622 the chain is on the cytoplasmic side; the sequence is KRKGNAEKYDKMDEPQHYGKSNSRNDEMLDPEASFWGEEKRASHTTPVLMEKPYY. Residues 578-594 are compositionally biased toward basic and acidic residues; the sequence is KMDEPQHYGKSNSRNDE. Residues 578-607 are disordered; sequence KMDEPQHYGKSNSRNDEMLDPEASFWGEEK.

It belongs to the apicomplexan parasites AMA1 family.

It localises to the membrane. Its function is as follows. Involved in parasite invasion of erythrocytes. The chain is Apical membrane antigen 1 (AMA-1) from Plasmodium falciparum (isolate FC27 / Papua New Guinea).